The primary structure comprises 223 residues: Sigma non-opioid intracellular receptor 1 (223 aa).

Topologically, residues 1-9 (MQWALGRRW) are lumenal. The tract at residues 2–8 (QWALGRR) is targeting to endoplasmic reticulum-associated lipid droplets. A helical membrane pass occupies residues 10 to 30 (VWAALLLAAAAVLTQVVWLWL). Topologically, residues 31 to 223 (GTQSFVFQHE…FTTYLFGQDS (193 aa)) are cytoplasmic. The interval 99 to 106 (SLSEYVLL) is important for ligand-binding. Residues 177-223 (VIPSTLAFALADTIFSTQDFLTLFYTLRAYARGLRLEFTTYLFGQDS) are C-terminal hydrophobic region.

The protein belongs to the ERG2 family. Homotrimer. Forms a ternary complex with ANK2 and ITPR3. The complex is disrupted by agonists. Interacts with KCNA4. Interacts with KCNA2; cocaine consumption leads to increased interaction. Interacts with RNF112 in an oxidative stress-regulated manner.

The protein localises to the nucleus inner membrane. The protein resides in the nucleus outer membrane. Its subcellular location is the nucleus envelope. It localises to the cytoplasmic vesicle. It is found in the endoplasmic reticulum membrane. The protein localises to the membrane. The protein resides in the lipid droplet. Its subcellular location is the cell junction. It localises to the cell membrane. It is found in the cell projection. The protein localises to the growth cone. The protein resides in the postsynaptic density membrane. Functions in lipid transport from the endoplasmic reticulum and is involved in a wide array of cellular functions probably through regulation of the biogenesis of lipid microdomains at the plasma membrane. Involved in the regulation of different receptors it plays a role in BDNF signaling and EGF signaling. Also regulates ion channels like the potassium channel and could modulate neurotransmitter release. Plays a role in calcium signaling through modulation together with ANK2 of the ITP3R-dependent calcium efflux at the endoplasmic reticulum. Plays a role in several other cell functions including proliferation, survival and death. Originally identified for its ability to bind various psychoactive drugs it is involved in learning processes, memory and mood alteration. Necessary for proper mitochondrial axonal transport in motor neurons, in particular the retrograde movement of mitochondria. Plays a role in protecting cells against oxidative stress-induced cell death via its interaction with RNF112. In Mustela erminea (Ermine), this protein is Sigma non-opioid intracellular receptor 1 (SIGMAR1).